Reading from the N-terminus, the 332-residue chain is Glycerol-3-phosphate dehydrogenase [NAD(P)+] (332 aa).

NADPH contacts are provided by tryptophan 11, arginine 30, and lysine 108. Residues lysine 108, glycine 137, and serine 139 each contribute to the sn-glycerol 3-phosphate site. NADPH is bound at residue alanine 141. The sn-glycerol 3-phosphate site is built by lysine 192, aspartate 245, serine 255, arginine 256, and asparagine 257. The active-site Proton acceptor is the lysine 192. Arginine 256 lines the NADPH pocket. Valine 280 and glutamate 282 together coordinate NADPH.

The protein belongs to the NAD-dependent glycerol-3-phosphate dehydrogenase family.

It localises to the cytoplasm. It catalyses the reaction sn-glycerol 3-phosphate + NAD(+) = dihydroxyacetone phosphate + NADH + H(+). The catalysed reaction is sn-glycerol 3-phosphate + NADP(+) = dihydroxyacetone phosphate + NADPH + H(+). It functions in the pathway membrane lipid metabolism; glycerophospholipid metabolism. Its function is as follows. Catalyzes the reduction of the glycolytic intermediate dihydroxyacetone phosphate (DHAP) to sn-glycerol 3-phosphate (G3P), the key precursor for phospholipid synthesis. This Burkholderia mallei (strain ATCC 23344) protein is Glycerol-3-phosphate dehydrogenase [NAD(P)+].